Here is a 362-residue protein sequence, read N- to C-terminus: Red-sensitive opsin (362 aa).

The Extracellular portion of the chain corresponds to methionine 1 to valine 49. N-linked (GlcNAc...) asparagine glycosylation occurs at asparagine 31. The chain crosses the membrane as a helical span at residues tyrosine 50–alanine 74. The Cytoplasmic segment spans residues threonine 75–asparagine 86. A helical membrane pass occupies residues tryptophan 87–isoleucine 112. Residues serine 113 to glutamate 126 lie on the Extracellular side of the membrane. Cysteines 123 and 200 form a disulfide. Residues glycine 127 to tryptophan 146 traverse the membrane as a helical segment. Residues glutamate 147–leucine 165 lie on the Cytoplasmic side of the membrane. Residues alanine 166–serine 189 traverse the membrane as a helical segment. The Extracellular segment spans residues arginine 190–serine 215. The chain crosses the membrane as a helical span at residues tyrosine 216–isoleucine 243. The Cytoplasmic segment spans residues arginine 244–arginine 265. The chain crosses the membrane as a helical span at residues methionine 266–alanine 289. Residues alanine 290 to histidine 297 are Extracellular-facing. Residues proline 298 to methionine 322 form a helical membrane-spanning segment. N6-(retinylidene)lysine is present on lysine 309. At asparagine 323 to alanine 362 the chain is on the cytoplasmic side.

It belongs to the G-protein coupled receptor 1 family. Opsin subfamily. In terms of processing, phosphorylated on some or all of the serine and threonine residues present in the C-terminal region. As to expression, the color pigments are found in the cone photoreceptor cells.

The protein localises to the membrane. Visual pigments are the light-absorbing molecules that mediate vision. They consist of an apoprotein, opsin, covalently linked to cis-retinal. The polypeptide is Red-sensitive opsin (Gallus gallus (Chicken)).